The chain runs to 816 residues: H(+)/Cl(-) exchange transporter 5 (816 aa).

The Cytoplasmic portion of the chain corresponds to 1–124 (MAMWQGAMDN…WALIHSVSDA (124 aa)). Transmembrane regions (helical) follow at residues 125-162 (FSGW…ICTG) and 208-231 (VNYF…VKVF). Residues 237–241 (GSGIP) carry the Selectivity filter part_1 motif. Ser-238 lines the chloride pocket. Positions 240–247 (IPEIKTIL) form an intramembrane region, helical. The next 2 helical transmembrane spans lie at 256–275 (LGKW…VSSG) and 281–300 (EGPL…HRFN). The Selectivity filter part_2 signature appears at 279-283 (GKEGP). Intramembrane regions (helical) lie at residues 312 to 324 (VLSA…VSVA) and 328 to 336 (PIGGVLFSL). The next 5 helical transmembrane spans lie at 348-366 (LWRS…RSIN), 389-414 (LVPF…IAWC), 422-442 (LGKY…ILAF), 498-518 (MWQL…TFGM), and 523-542 (GLFI…LGVG). The Selectivity filter part_3 signature appears at 523 to 527 (GLFIP). Phe-525 serves as a coordination point for chloride. The segment at residues 570–584 (GLYAMVGAAACLGGV) is an intramembrane region (helical). The segment at residues 585 to 587 (TRM) is an intramembrane region (note=Loop between two helices). Residues 588 to 599 (TVSLVVIMFELT) constitute an intramembrane region (helical). Residues 600–604 (GGLEY) constitute an intramembrane region (note=Loop between two helices). The chain crosses the membrane as a helical span at residues 605-622 (IVPLMAAAMTSKWVADAL). The Cytoplasmic segment spans residues 623 to 816 (GREGIYDAHI…NQDPDSILFN (194 aa)). Residue Tyr-628 coordinates chloride. CBS domains lie at 656 to 720 (MKPR…ARKK) and 752 to 812 (ILDL…DPDS). ATP contacts are provided by residues Thr-666, 687-689 (YSG), and 794-797 (TKKD).

The protein belongs to the chloride channel (TC 2.A.49) family. ClC-5/CLCN5 subfamily. As to quaternary structure, interacts with NEDD4 and NEDD4L. Post-translationally, ubiquitinated by NEDD4L in the presence of albumin; which promotes endocytosis and proteasomal degradation.

The protein resides in the golgi apparatus membrane. It is found in the endosome membrane. Its subcellular location is the cell membrane. It catalyses the reaction 2 chloride(in) + H(+)(out) = 2 chloride(out) + H(+)(in). In terms of biological role, proton-coupled chloride transporter. Functions as antiport system and exchanges chloride ions against protons. Important for normal acidification of the endosome lumen. May play an important role in renal tubular function. The CLC channel family contains both chloride channels and proton-coupled anion transporters that exchange chloride or another anion for protons. The absence of conserved gating glutamate residues is typical for family members that function as channels. This chain is H(+)/Cl(-) exchange transporter 5 (CLCN5), found in Oryctolagus cuniculus (Rabbit).